A 536-amino-acid polypeptide reads, in one-letter code: Probable cytochrome P450 12a5, mitochondrial (536 aa).

Cys482 lines the heme pocket.

The protein belongs to the cytochrome P450 family. Heme serves as cofactor.

The protein localises to the mitochondrion membrane. This chain is Probable cytochrome P450 12a5, mitochondrial (Cyp12a5), found in Drosophila melanogaster (Fruit fly).